The primary structure comprises 31 residues: Hemocyanin subunit 1 (31 aa).

This sequence belongs to the tyrosinase family. Hemocyanin subfamily. Hemolymph.

It is found in the secreted. The protein resides in the extracellular space. Its function is as follows. Hemocyanins are copper-containing oxygen carriers occurring freely dissolved in the hemolymph of many mollusks and arthropods. The sequence is that of Hemocyanin subunit 1 from Homarus americanus (American lobster).